The primary structure comprises 348 residues: Serpentine receptor class alpha-29 (348 aa).

Transmembrane regions (helical) follow at residues 28–48, 108–130, 145–165, 193–213, 246–266, and 280–300; these read FILM…QTLW, FLYY…DRLF, GFIV…FWTF, INDS…FLYI, CIII…PSIF, and LILA…LIVI.

The protein belongs to the nematode receptor-like protein sra family.

The protein resides in the membrane. The polypeptide is Serpentine receptor class alpha-29 (sra-29) (Caenorhabditis elegans).